The chain runs to 562 residues: Glutamate--tRNA ligase (562 aa).

The 'HIGH' region signature appears at 104 to 114; sequence PNPDFYMTLGN.

The protein belongs to the class-I aminoacyl-tRNA synthetase family. Glutamate--tRNA ligase type 2 subfamily.

It localises to the cytoplasm. The catalysed reaction is tRNA(Glu) + L-glutamate + ATP = L-glutamyl-tRNA(Glu) + AMP + diphosphate. In terms of biological role, catalyzes the attachment of glutamate to tRNA(Glu) in a two-step reaction: glutamate is first activated by ATP to form Glu-AMP and then transferred to the acceptor end of tRNA(Glu). This chain is Glutamate--tRNA ligase, found in Ignicoccus hospitalis (strain KIN4/I / DSM 18386 / JCM 14125).